Consider the following 159-residue polypeptide: 3-hydroxyacyl-[acyl-carrier-protein] dehydratase FabZ (159 aa).

Residue histidine 59 is part of the active site.

It belongs to the thioester dehydratase family. FabZ subfamily.

The protein localises to the cytoplasm. The catalysed reaction is a (3R)-hydroxyacyl-[ACP] = a (2E)-enoyl-[ACP] + H2O. Its function is as follows. Involved in unsaturated fatty acids biosynthesis. Catalyzes the dehydration of short chain beta-hydroxyacyl-ACPs and long chain saturated and unsaturated beta-hydroxyacyl-ACPs. The polypeptide is 3-hydroxyacyl-[acyl-carrier-protein] dehydratase FabZ (Caulobacter vibrioides (strain ATCC 19089 / CIP 103742 / CB 15) (Caulobacter crescentus)).